A 103-amino-acid polypeptide reads, in one-letter code: Cytochrome c-552 (103 aa).

The first 22 residues, 1–22, serve as a signal peptide directing secretion; that stretch reads MKTAWLGTFAASALLVAGYAQA. Heme c is bound by residues C32, C35, H36, and M81.

In terms of assembly, monomer. Binds 1 heme c group covalently per subunit.

Its subcellular location is the periplasm. Monoheme c-type cytochrome. Probable electron donor to membrane cytochrome oxidase and to periplasmic nitrite reductase. The chain is Cytochrome c-552 (cyt) from Nitrosomonas europaea (strain ATCC 19718 / CIP 103999 / KCTC 2705 / NBRC 14298).